Here is a 186-residue protein sequence, read N- to C-terminus: Outer-membrane lipoprotein LolB (186 aa).

A signal peptide spans 1 to 16; the sequence is MRRLAVIASLAWALGG. Cys17 is lipidated: N-palmitoyl cysteine. The S-diacylglycerol cysteine moiety is linked to residue Cys17.

This sequence belongs to the LolB family. In terms of assembly, monomer.

Its subcellular location is the cell outer membrane. In terms of biological role, plays a critical role in the incorporation of lipoproteins in the outer membrane after they are released by the LolA protein. The polypeptide is Outer-membrane lipoprotein LolB (Thiobacillus denitrificans (strain ATCC 25259 / T1)).